The primary structure comprises 418 residues: MFSREMNIADFDPELANAMANEVERQEHHIELIASENYCSPRVMEAQGSQLTNKYAEGYPGKRYYGGCEHVDVVEQLAIDRAKELFGADYANVQPHAGSQANSAVFMALLDAGDTVLGMSLSEGGHLTHGSHVNFSGKTYNAVQYGLDKETGEIDYAQVEALAKEHKPKMIIGGFSAYSGIVDWAKFREIADSVGAYLLVDMAHVAGLVAAGVYPNPLPHAHVVTTTTHKTLAGPRSGLILSSCGDEAIYKKLNSSVFPGNQGGPLCHVIAAKAVAFKEALQPEFKAYQQQVVANAKAMVSVMQERGYNIVSGGTDNHLFLLDLIDKDITGKDADAALGAANITVNKNSVPNDPRSPFVTSGLRIGSPAITRRGFKEEQAKQVATWICDILDNMGDESVIKRVQSEVVALCAQFPVYK.

(6S)-5,6,7,8-tetrahydrofolate is bound by residues leucine 121 and 125–127; that span reads GHL. Position 230 is an N6-(pyridoxal phosphate)lysine (lysine 230). Residue 356–358 coordinates (6S)-5,6,7,8-tetrahydrofolate; sequence SPF.

This sequence belongs to the SHMT family. In terms of assembly, homodimer. The cofactor is pyridoxal 5'-phosphate.

It is found in the cytoplasm. It catalyses the reaction (6R)-5,10-methylene-5,6,7,8-tetrahydrofolate + glycine + H2O = (6S)-5,6,7,8-tetrahydrofolate + L-serine. Its pathway is one-carbon metabolism; tetrahydrofolate interconversion. It participates in amino-acid biosynthesis; glycine biosynthesis; glycine from L-serine: step 1/1. Functionally, catalyzes the reversible interconversion of serine and glycine with tetrahydrofolate (THF) serving as the one-carbon carrier. This reaction serves as the major source of one-carbon groups required for the biosynthesis of purines, thymidylate, methionine, and other important biomolecules. Also exhibits THF-independent aldolase activity toward beta-hydroxyamino acids, producing glycine and aldehydes, via a retro-aldol mechanism. In Alteromonas mediterranea (strain DSM 17117 / CIP 110805 / LMG 28347 / Deep ecotype), this protein is Serine hydroxymethyltransferase.